The following is a 499-amino-acid chain: ATP synthase subunit alpha (499 aa).

169 to 176 provides a ligand contact to ATP; the sequence is GDRGTGKT.

It belongs to the ATPase alpha/beta chains family. F-type ATPases have 2 components, CF(1) - the catalytic core - and CF(0) - the membrane proton channel. CF(1) has five subunits: alpha(3), beta(3), gamma(1), delta(1), epsilon(1). CF(0) has three main subunits: a(1), b(2) and c(9-12). The alpha and beta chains form an alternating ring which encloses part of the gamma chain. CF(1) is attached to CF(0) by a central stalk formed by the gamma and epsilon chains, while a peripheral stalk is formed by the delta and b chains.

The protein localises to the cell inner membrane. It carries out the reaction ATP + H2O + 4 H(+)(in) = ADP + phosphate + 5 H(+)(out). Its function is as follows. Produces ATP from ADP in the presence of a proton gradient across the membrane. The alpha chain is a regulatory subunit. This is ATP synthase subunit alpha from Brachyspira hyodysenteriae (strain ATCC 49526 / WA1).